A 97-amino-acid polypeptide reads, in one-letter code: SAGA-associated factor 11 (97 aa).

The segment at 70–91 (IECNVCGREVSGNRFAAHLVRC) adopts an SGF11-type zinc-finger fold.

The protein belongs to the SGF11 family. Component of the 1.8 MDa SAGA transcription coactivator-HAT complex. SAGA is built of 5 distinct domains with specialized functions. Within the SAGA complex, SUS1, SGF11, SGF73 and UBP8 form an additional subcomplex of SAGA called the DUB module (deubiquitination module). Interacts directly with SGF73, SUS1 and UBP8.

The protein resides in the nucleus. Functions as a component of the transcription regulatory histone acetylation (HAT) complex SAGA. At the promoters, SAGA is required for recruitment of the basal transcription machinery. It influences RNA polymerase II transcriptional activity through different activities such as TBP interaction and promoter selectivity, interaction with transcription activators, and chromatin modification through histone acetylation and deubiquitination. SAGA acetylates nucleosomal histone H3 to some extent (to form H3K9ac, H3K14ac, H3K18ac and H3K23ac). SAGA interacts with DNA via upstream activating sequences (UASs). Involved in transcriptional regulation of a subset of SAGA-regulated genes. Within the SAGA complex, participates in a subcomplex, that specifically deubiquitinates histones H2B. This Kluyveromyces lactis (strain ATCC 8585 / CBS 2359 / DSM 70799 / NBRC 1267 / NRRL Y-1140 / WM37) (Yeast) protein is SAGA-associated factor 11.